Consider the following 351-residue polypeptide: Spermidine/putrescine import ATP-binding protein PotA (351 aa).

The 231-residue stretch at 6–236 folds into the ABC transporter domain; it reads LELRNVTKEY…PENAWVANFI (231 aa). 38 to 45 serves as a coordination point for ATP; the sequence is GPSGCGKT.

It belongs to the ABC transporter superfamily. Spermidine/putrescine importer (TC 3.A.1.11.1) family. As to quaternary structure, the complex is composed of two ATP-binding proteins (PotA), two transmembrane proteins (PotB and PotC) and a solute-binding protein (PotD).

The protein resides in the cell membrane. The enzyme catalyses ATP + H2O + polyamine-[polyamine-binding protein]Side 1 = ADP + phosphate + polyamineSide 2 + [polyamine-binding protein]Side 1.. Part of the ABC transporter complex PotABCD involved in spermidine/putrescine import. Responsible for energy coupling to the transport system. The sequence is that of Spermidine/putrescine import ATP-binding protein PotA from Mycoplasma mycoides subsp. mycoides SC (strain CCUG 32753 / NCTC 10114 / PG1).